The sequence spans 185 residues: Elongation factor P (185 aa).

Belongs to the elongation factor P family.

It is found in the cytoplasm. It participates in protein biosynthesis; polypeptide chain elongation. In terms of biological role, involved in peptide bond synthesis. Stimulates efficient translation and peptide-bond synthesis on native or reconstituted 70S ribosomes in vitro. Probably functions indirectly by altering the affinity of the ribosome for aminoacyl-tRNA, thus increasing their reactivity as acceptors for peptidyl transferase. This chain is Elongation factor P, found in Pelotomaculum thermopropionicum (strain DSM 13744 / JCM 10971 / SI).